The sequence spans 397 residues: Elongation factor Tu (397 aa).

Residues 10 to 207 (KPHVNIGTIG…ACDSYIPEPQ (198 aa)) form the tr-type G domain. Positions 19-26 (GHIDHGKT) are G1. 19–26 (GHIDHGKT) contributes to the GTP binding site. Threonine 26 is a Mg(2+) binding site. Residues 60 to 64 (GITIA) form a G2 region. The G3 stretch occupies residues 81-84 (DCPG). GTP is bound by residues 81–85 (DCPGH) and 136–139 (NKCD). The tract at residues 136–139 (NKCD) is G4. Residues 174 to 176 (SAL) are G5.

This sequence belongs to the TRAFAC class translation factor GTPase superfamily. Classic translation factor GTPase family. EF-Tu/EF-1A subfamily. Monomer.

It is found in the cytoplasm. It catalyses the reaction GTP + H2O = GDP + phosphate + H(+). Functionally, GTP hydrolase that promotes the GTP-dependent binding of aminoacyl-tRNA to the A-site of ribosomes during protein biosynthesis. In Nitratidesulfovibrio vulgaris (strain DSM 19637 / Miyazaki F) (Desulfovibrio vulgaris), this protein is Elongation factor Tu.